Here is a 159-residue protein sequence, read N- to C-terminus: MMIMKEFTHTDEKGVRMVDVGSKPVVRRTATAEGHILLREDTINLIREKKIEKGNVLATAQIAAIVAVKRTWEIIPLCHPLPLTGVDVEFDLDDDRITARVTVRCDGKTGVEMEAVTGVSVALLTIWDMVKSVEKDDDGQYPETAISNIRVIKKEKLEL.

The active site involves D128.

This sequence belongs to the MoaC family.

It functions in the pathway cofactor biosynthesis; molybdopterin biosynthesis. Its function is as follows. Together with MoaA, is involved in the conversion of 5'-GTP to cyclic pyranopterin monophosphate (cPMP or molybdopterin precursor Z). This chain is Probable cyclic pyranopterin monophosphate synthase accessory protein, found in Methanothermobacter thermautotrophicus (strain ATCC 29096 / DSM 1053 / JCM 10044 / NBRC 100330 / Delta H) (Methanobacterium thermoautotrophicum).